The primary structure comprises 183 residues: UPF0397 protein stu0306/stu0307 (183 aa).

5 helical membrane passes run 11-31 (ATGIGAALFIIICIFVNIPIF), 44-64 (VLFSVIFGSRSIIGFFMGFIG), 74-94 (GDISWAWVLASGITGLVIGLF), 111-131 (IWFNLAQALGLLIAYGVVTPI), and 149-169 (FVAGVANFITIAIGGTLLLAI).

The protein belongs to the UPF0397 family.

The protein localises to the cell membrane. The protein is UPF0397 protein stu0306/stu0307 of Streptococcus thermophilus (strain ATCC BAA-250 / LMG 18311).